An 85-amino-acid polypeptide reads, in one-letter code: Large ribosomal subunit protein bL27 (85 aa).

A disordered region spans residues 1–21 (MAHKKAGGSTRNGRDSESKRL).

Belongs to the bacterial ribosomal protein bL27 family.

In Pseudomonas putida (strain W619), this protein is Large ribosomal subunit protein bL27.